A 574-amino-acid polypeptide reads, in one-letter code: Protein OBERON 2 (574 aa).

Composition is skewed to polar residues over residues 1–10 (MGTSSGSNHP) and 65–76 (SMSQKTEPDSME). Residues 1-76 (MGTSSGSNHP…SQKTEPDSME (76 aa)) form a disordered region. The PHD-type zinc finger occupies 226–291 (LCMCTICNKF…VFKCRACNRT (66 aa)). Residues 416–524 (KKARMALETC…LFEKIKLQEN (109 aa)) are a coiled coil.

As to quaternary structure, self-interacts. Interacts with OBE1, OBE3 and OBE4. Binds to VPg of pea seed borne mosaic virus (PSbMV), turnip mosaic virus (TuMV) and lettuce mosaic virus (LMV), but not with VPg of tobacco etch virus (TEV), cowpea mosaic virus (CPMV), tomato black ring virus (TBRV) and grapevine fan leaf virus (GFLV). Expressed in roots, seedlings, stems, leaves, flowers and siliques, especially in the vasculature.

It is found in the nucleus. Probable transcription factor that acts together with OBE1 for the maintenance and/or establishment of both the shoot and root meristems, probably by controlling the expression of the meristem genes such as WUS, PLT1 and PLT2 and of genes required for auxin responses. Promotes cell meristematic activity via the WUSCHEL-CLAVATA pathway. Involved in the development of the basal pole and in auxin-mediated root and vascular development in the embryo. Confers sensitivity to turnip mosaic virus (TuMV) probably by promoting viral movement and multiplication via interaction with TuMV VPg. The polypeptide is Protein OBERON 2 (Arabidopsis thaliana (Mouse-ear cress)).